The chain runs to 493 residues: Cell division protein FtsA (493 aa).

The disordered stretch occupies residues 434–468 (AHQSNPTPHIHSSPTERNLSDLKTPSAPLNTAKND). Residues 436-465 (QSNPTPHIHSSPTERNLSDLKTPSAPLNTA) are compositionally biased toward polar residues.

Belongs to the FtsA/MreB family. As to quaternary structure, self-interacts. Interacts with FtsZ.

It localises to the cell inner membrane. Its function is as follows. Cell division protein that is involved in the assembly of the Z ring. May serve as a membrane anchor for the Z ring. The chain is Cell division protein FtsA from Helicobacter pylori (strain J99 / ATCC 700824) (Campylobacter pylori J99).